A 348-amino-acid polypeptide reads, in one-letter code: Ninja-family protein AFP2 (348 aa).

The disordered stretch occupies residues 186-272 (DSDGGGATGG…VDRKGKGMAT (87 aa)). Residues 187 to 197 (SDGGGATGGGS) show a composition bias toward gly residues. 2 stretches are compositionally biased toward polar residues: residues 207 to 216 (KNQQGSSNSC) and 228 to 244 (CSSN…SVTR). Positions 247–267 (KVNENENEKRVRSEDSVDRKG) are enriched in basic and acidic residues.

Belongs to the Ninja family. Forms a homodimer and heterodimer with AFP1 and AFP3. Interacts with ABI5/DPBF1, DPBF2, AREB3/DPBF3, EEL/DPBF4, ABF1, ABF3/DPBF5 and ABF4/AREB2.

Its subcellular location is the nucleus. Acts as a negative regulator of abscisic acid (ABA) response during germination through the ubiquitin-mediated proteolysis of ABI5/DPBF1. This chain is Ninja-family protein AFP2 (AFP2), found in Arabidopsis thaliana (Mouse-ear cress).